A 449-amino-acid polypeptide reads, in one-letter code: Gamma-aminobutyric acid receptor subunit delta (449 aa).

Positions 1–24 (MDVLGWLLLPLLLLCTQPHHGARA) are cleaved as a signal peptide. The Extracellular segment spans residues 25-251 (MNDIGDYVGS…QLRRNRGVYI (227 aa)). N-linked (GlcNAc...) asparagine glycans are attached at residues Asn103 and Asn106. Cysteines 164 and 178 form a disulfide. Residues 252 to 271 (IQSYMPSVLLVAMSWVSFWI) traverse the membrane as a helical segment. At 272-275 (SQAA) the chain is on the cytoplasmic side. Residues 276–298 (VPARVSLGITTVLTMTTLMVSAR) traverse the membrane as a helical segment. Topologically, residues 299–308 (SSLPRASAIK) are extracellular. A helical transmembrane segment spans residues 309–331 (ALDVYFWICYVFVFAALVEYAFA). Residues 332 to 423 (HFNADYRKKR…SRLKPIDADT (92 aa)) lie on the Cytoplasmic side of the membrane. A Phosphoserine modification is found at Ser390. A helical transmembrane segment spans residues 424–446 (IDIYARAVFPAAFAAVNIIYWAA). Residues 447–449 (YTM) are Extracellular-facing.

Belongs to the ligand-gated ion channel (TC 1.A.9) family. Gamma-aminobutyric acid receptor (TC 1.A.9.5) subfamily. GABRD sub-subfamily. As to quaternary structure, heteropentamer, formed by a combination of alpha (GABRA1-6), beta (GABRB1-3), gamma (GABRG1-3), delta (GABRD), epsilon (GABRE), rho (GABRR1-3), pi (GABRP) and theta (GABRQ) chains, each subunit exhibiting distinct physiological and pharmacological properties.

It localises to the cell membrane. It carries out the reaction chloride(in) = chloride(out). Delta subunit of the heteropentameric ligand-gated chloride channel gated by gamma-aminobutyric acid (GABA), a major inhibitory neurotransmitter in the brain. GABA-gated chloride channels, also named GABA(A) receptors (GABAAR), consist of five subunits arranged around a central pore and contain GABA active binding site(s) located at the alpha and beta subunit interface(s). When activated by GABA, GABAARs selectively allow the flow of chloride anions across the cell membrane down their electrochemical gradient. GABAARs containing delta/GABRD subunits are predominantly expressed and located in extrasynaptic or perisynaptic positions on hippocampus and cerebellar granule cells, and contribute to the tonic GABAergic inhibition. GABAAR containing alpha-4-beta-3-delta subunits can simultaneously bind GABA and histamine where histamine binds at the interface of two neighboring beta subunits, which may be involved in the regulation of sleep and wakefulness. This chain is Gamma-aminobutyric acid receptor subunit delta, found in Mus musculus (Mouse).